The sequence spans 615 residues: Sodium-dependent neutral amino acid transporter B(0)AT3 (615 aa).

Residues 1-26 lie on the Cytoplasmic side of the membrane; the sequence is MAQASGMDPLVDIEDERPKWDNKLQY. A helical membrane pass occupies residues 27 to 47; the sequence is LLSCIGFAVGLGNIWRFPYLC. Residues 48–52 lie on the Extracellular side of the membrane; sequence QTHGG. Residues 53–73 form a helical membrane-spanning segment; it reads GAFLIPYFIALVFEGIPLFYI. The Cytoplasmic portion of the chain corresponds to 74–105; that stretch reads ELAIGQRLRRGSIGVWKTISPYLGGVGLGCFS. A helical membrane pass occupies residues 106 to 126; that stretch reads VSFLVSLYYNTVLLWVLWFFL. Topologically, residues 127–177 are extracellular; the sequence is NSFQHPLPWSTCPLDLNRTGFVQECQSSGTVSYFWYRQTLNITSDISNTGT. Asparagine 143 and asparagine 167 each carry an N-linked (GlcNAc...) asparagine glycan. The chain crosses the membrane as a helical span at residues 178–198; the sequence is IQWKLFLCLVACWSTVYLCVI. Residues 199–206 lie on the Cytoplasmic side of the membrane; sequence RGIESTGK. A helical membrane pass occupies residues 207-227; sequence VIYFTALFPYLVLTIFLIRGL. Over 228–255 the chain is Extracellular; the sequence is TLPGATEGLIYLFTPNMKTLQNPRVWLD. A helical transmembrane segment spans residues 256 to 276; sequence AATQIFFSLSLAFGGHIAFAS. Over 277–288 the chain is Cytoplasmic; it reads YNPPRNNCEKDA. A helical transmembrane segment spans residues 289–309; that stretch reads VIIALVNSMTSLYASIAIFSV. Topologically, residues 310–397 are extracellular; sequence MGFKASNDYG…FTEAVLHMPG (88 aa). N-linked (GlcNAc...) asparagine glycosylation occurs at asparagine 353. A helical transmembrane segment spans residues 398–418; sequence ASVWSVLFFGMLFTLGLSSMF. At 419 to 441 the chain is on the cytoplasmic side; that stretch reads GNMEGVITPLLDMGILPKGIPKE. Residues 442 to 462 traverse the membrane as a helical segment; it reads VMTGVICFACFLSAICFTLQS. Over 463-472 the chain is Extracellular; sequence GGYWLEIFDS. Residues 473 to 493 form a helical membrane-spanning segment; sequence FAASLNLIIFAFMEVVGVIHI. The Cytoplasmic segment spans residues 494–520; that stretch reads YGMKRFCDDIEWMTGRRPGLYWQVTWR. The helical transmembrane segment at 521-541 threads the bilayer; that stretch reads VVSPMLLFGIFLSYIVLLIQT. Residues 542–570 lie on the Extracellular side of the membrane; sequence PPSYKAWNPQYEHFPSREEKFYPGWVQVT. The helical transmembrane segment at 571–591 threads the bilayer; it reads CVLLSFLPSLWVPGVALAQLL. At 592 to 615 the chain is on the cytoplasmic side; sequence SQYKQRWKATHLESGLKLQESRGC.

It belongs to the sodium:neurotransmitter symporter (SNF) (TC 2.A.22) family. SLC6A18 subfamily. Interacts with CLTRN; this interaction regulates the trafficking of SLC6A18 to the cell membrane and its activity. In terms of tissue distribution, expressed predominantly in kidney.

The protein resides in the apical cell membrane. It is found in the cell membrane. It carries out the reaction L-alanine(out) + chloride(out) + 2 Na(+)(out) = L-alanine(in) + chloride(in) + 2 Na(+)(in). It catalyses the reaction glycine(out) + chloride(out) + 2 Na(+)(out) = glycine(in) + chloride(in) + 2 Na(+)(in). The enzyme catalyses L-methionine(out) + chloride(out) + 2 Na(+)(out) = L-methionine(in) + chloride(in) + 2 Na(+)(in). The catalysed reaction is L-valine(out) + chloride(out) + 2 Na(+)(out) = L-valine(in) + chloride(in) + 2 Na(+)(in). It carries out the reaction L-isoleucine(out) + chloride(out) + 2 Na(+)(out) = L-isoleucine(in) + chloride(in) + 2 Na(+)(in). It catalyses the reaction L-serine(out) + chloride(out) + 2 Na(+)(out) = L-serine(in) + chloride(in) + 2 Na(+)(in). The enzyme catalyses L-leucine(out) + chloride(out) + 2 Na(+)(out) = L-leucine(in) + chloride(in) + 2 Na(+)(in). Functionally, symporter that transports one amino acid molecule together with two sodium and one chloride ions in kidneys and plays a role in the neutral amino acids reabsorption. Preferentially transports neutral amino acids such as L-glycine and L-alanine but also other neutral amino acids. Required CLTRN for cell surface expression and for its amino acid transporter activity. The transport mechanism is pH-independent. This is Sodium-dependent neutral amino acid transporter B(0)AT3 from Mus musculus (Mouse).